Reading from the N-terminus, the 74-residue chain is ERTHTGEKPFECPECHKRFTRDHHLKTHMRLHTGEKPYHCSHCDRQFVQVANLRRHLRVHTGEKPYTCEICDGK.

C2H2-type zinc fingers lie at residues 1–4 (ERTH), 10–32 (FECP…MRLH), 38–60 (YHCS…LRVH), and 66–74 (YTCEICDGK).

The protein belongs to the krueppel C2H2-type zinc-finger protein family.

The protein localises to the nucleus. Krueppel is a gap class segmentation protein. The protein is Protein krueppel (Kr) of Musca domestica (House fly).